The primary structure comprises 541 residues: NAD(P)H-quinone oxidoreductase subunit 2 A, chloroplastic (541 aa).

Transmembrane regions (helical) follow at residues 24 to 44 (LLLFDGSLIFPECILIFGLIL), 57 to 77 (IPWLYFIPSTSLVMSITALLF), 99 to 119 (IFQFLILLCSTLCIPLSVEYI), 124 to 144 (MAITEFLLFVLTATLGGMFLC), 149 to 169 (FITIFVAPECFSLCSYLLSGY), 183 to 203 (YLLMGGASSSILVHGFSWLYG), 227 to 247 (PGISIALIFITVGIGFKLSPA), 289 to 309 (ILSPTPVVAFLSVTSKVAASA), 326 to 346 (WHLLLEILAILSMILGNLIAI), 354 to 374 (MLAYSSIGQIGYVIIGIIVGD), 385 to 405 (YMLFYISMNLGTFACIVLFGL), 426 to 446 (ALSLALCLLSLGGLPPLAGFF), 449 to 469 (LYLFWCGWQAGLYFLVLIGLL), and 515 to 535 (MIVCVIASTIPGISMNPIIAI).

The protein belongs to the complex I subunit 2 family. NDH is composed of at least 16 different subunits, 5 of which are encoded in the nucleus.

It is found in the plastid. The protein resides in the chloroplast thylakoid membrane. It catalyses the reaction a plastoquinone + NADH + (n+1) H(+)(in) = a plastoquinol + NAD(+) + n H(+)(out). The enzyme catalyses a plastoquinone + NADPH + (n+1) H(+)(in) = a plastoquinol + NADP(+) + n H(+)(out). In terms of biological role, NDH shuttles electrons from NAD(P)H:plastoquinone, via FMN and iron-sulfur (Fe-S) centers, to quinones in the photosynthetic chain and possibly in a chloroplast respiratory chain. The immediate electron acceptor for the enzyme in this species is believed to be plastoquinone. Couples the redox reaction to proton translocation, and thus conserves the redox energy in a proton gradient. In Coffea arabica (Arabian coffee), this protein is NAD(P)H-quinone oxidoreductase subunit 2 A, chloroplastic.